Reading from the N-terminus, the 1019-residue chain is Collagen alpha-1(VI) chain (1019 aa).

The first 19 residues, M1–A19, serve as a signal peptide directing secretion. The 197-residue stretch at D37–I233 folds into the VWFA 1 domain. Residue N212 is glycosylated (N-linked (GlcNAc...) asparagine). Positions F248–G588 are disordered. Over residues P253–D262 the composition is skewed to pro residues. 2 stretches are compositionally biased toward basic and acidic residues: residues K299–K332 and G370–P380. Over residues E427–D436 the composition is skewed to low complexity. The short motif at R476–D478 is the Cell attachment site element. Residue N514 is glycosylated (N-linked (GlcNAc...) asparagine). The Cell attachment site motif lies at R529 to D531. N535 carries an N-linked (GlcNAc...) asparagine glycan. The span at R577 to G588 shows a compositional bias: pro residues. VWFA domains are found at residues D613–I800 and D824–V1012. Residues N799 and N887 are each glycosylated (N-linked (GlcNAc...) asparagine).

Belongs to the type VI collagen family. Trimers composed of three different chains: alpha 1(VI), alpha 2(VI), and alpha 3(VI). Post-translationally, prolines at the third position of the tripeptide repeating unit (G-X-Y) are hydroxylated in some or all of the chains.

It localises to the secreted. The protein localises to the extracellular space. The protein resides in the extracellular matrix. Functionally, collagen VI acts as a cell-binding protein. The chain is Collagen alpha-1(VI) chain (COL6A1) from Gallus gallus (Chicken).